The sequence spans 427 residues: Serine--tRNA ligase (427 aa).

235–237 provides a ligand contact to L-serine; that stretch reads TAE. ATP-binding positions include 266-268 and Val282; that span reads RRE. An L-serine-binding site is contributed by Glu289. 353–356 serves as a coordination point for ATP; that stretch reads EASS. Ser389 provides a ligand contact to L-serine.

This sequence belongs to the class-II aminoacyl-tRNA synthetase family. Type-1 seryl-tRNA synthetase subfamily. Homodimer. The tRNA molecule binds across the dimer.

Its subcellular location is the cytoplasm. The enzyme catalyses tRNA(Ser) + L-serine + ATP = L-seryl-tRNA(Ser) + AMP + diphosphate + H(+). The catalysed reaction is tRNA(Sec) + L-serine + ATP = L-seryl-tRNA(Sec) + AMP + diphosphate + H(+). The protein operates within aminoacyl-tRNA biosynthesis; selenocysteinyl-tRNA(Sec) biosynthesis; L-seryl-tRNA(Sec) from L-serine and tRNA(Sec): step 1/1. In terms of biological role, catalyzes the attachment of serine to tRNA(Ser). Is also able to aminoacylate tRNA(Sec) with serine, to form the misacylated tRNA L-seryl-tRNA(Sec), which will be further converted into selenocysteinyl-tRNA(Sec). This chain is Serine--tRNA ligase, found in Chlorobium phaeobacteroides (strain BS1).